Consider the following 60-residue polypeptide: Metallothionein A (60 aa).

The segment at M1 to C28 is beta. The a divalent metal cation site is built by C4, C6, C12, C14, C18, C20, C23, C25, C28, C32, C33, C35, C36, C40, C43, C47, C49, C54, C58, and C59. The segment at K29–Q60 is alpha.

This sequence belongs to the metallothionein superfamily. Type 1 family.

In terms of biological role, metallothioneins have a high content of cysteine residues that bind various heavy metals. The sequence is that of Metallothionein A (mta) from Chionodraco rastrospinosus (Ocellated icefish).